The primary structure comprises 300 residues: MVEINGVPVEDTFCEAFKGLYARFIVTAADERPLREAAENVAALPATVFGESEAGVERWLDPEETPDGRPGFVAQMWVEYGDDAVKKLEHELGKRIRQGVLVRPTTRVFDACEDPDGYIDTERPIGRCADGYEYTDVRFDREMVHVPIMMGEFLIERRLGYAEGVAGGLVWLFCEDVDAALEAGYRAVEALRDVEGVITPFNVCAAGSKPETIYPDIGPTTNHPYCPTLRDRILDSKVPEGVEAIPEIVINGVSLDVVKRAIGIAIEAATEVDGVVKVSAGNFGGKLGDYRIPLRECIRE.

It belongs to the FTR family.

This Methanopyrus kandleri (strain AV19 / DSM 6324 / JCM 9639 / NBRC 100938) protein is Formylmethanofuran--tetrahydromethanopterin formyltransferase-like protein.